The following is a 409-amino-acid chain: D-galactonate dehydratase family member Achl_0790 (409 aa).

D217 is a Mg(2+) binding site. H219 contributes to the D-arabinonate binding site. E243 and E269 together coordinate Mg(2+). Residues E269, R290, H319, and E346 each coordinate D-arabinonate.

Belongs to the mandelate racemase/muconate lactonizing enzyme family. GalD subfamily.

Has no detectable activity with D-mannonate and with a panel of 70 other acid sugars (in vitro), in spite of the conservation of the residues that are expected to be important for catalytic activity and cofactor binding. May have evolved a divergent function. The polypeptide is D-galactonate dehydratase family member Achl_0790 (Pseudarthrobacter chlorophenolicus (strain ATCC 700700 / DSM 12829 / CIP 107037 / JCM 12360 / KCTC 9906 / NCIMB 13794 / A6) (Arthrobacter chlorophenolicus)).